The primary structure comprises 79 residues: Hematopoietic cell signal transducer (79 aa).

The signal sequence occupies residues 1–18; that stretch reads MAPPGHLLFLFLLPVAAS. Over 19–35 the chain is Extracellular; it reads QTNEGSCSGCGPLSLPL. Residues 36–56 form a helical membrane-spanning segment; it reads LAGLVAADAVMSLLIVGVVFV. Residues 57–79 are Cytoplasmic-facing; it reads CMRLHSRPAQEDGRVYINMPGRG. Tyrosine 72 is modified (phosphotyrosine). Positions 72–74 are GRB2 binding site; sequence YIN. The segment at 72–75 is PIK3R1 binding site; the sequence is YINM.

It belongs to the DAP10 family. Homodimer; Disulfide-linked. Heterohexamer composed of four subunits of HCST/DAP10 and two subunits of KLRK1. Interacts (via transmembrane domain) with KLRK1 (via transmembrane domain); the interaction is required for KLRK1 NK cell surface and induces NK cell-mediated cytotoxicity. Interacts with PIK3R1 and GRB2. Interacts with CLEC5A. Forms an CLEC5A/TYROBP/HCST trimolecular complex depending almost solely on TYROBP. Interacts with CD300H. In terms of processing, phosphorylated; PIK3R1 and GRB2 associate specifically with tyrosine-phosphorylated HCST. Post-translationally, O-glycosylated.

The protein localises to the membrane. Functionally, transmembrane adapter protein which associates with KLRK1 to form an activation receptor KLRK1-HCST in lymphoid and myeloid cells; this receptor plays a major role in triggering cytotoxicity against target cells expressing cell surface ligands such as MHC class I chain-related MICA and MICB, and UL16-binding proteins (ULBPs); these ligands are up-regulated by stress conditions and pathological state such as viral infection and tumor transformation. Functions as a docking site for PI3-kinase PIK3R1 and GRB2. Interaction of ULBPs with KLRK1-HCST triggers calcium mobilization and activation of the PIK3R1, MAP2K/ERK, and JAK2/STAT5 signaling pathways. Both PIK3R1 and GRB2 are required for full KLRK1-HCST-mediated activation and ultimate killing of target cells. In NK cells, KLRK1-HCST signaling directly induces cytotoxicity and enhances cytokine production initiated via DAP12/TYROBP-associated receptors. In T-cells, it provides primarily costimulation for TCR-induced signals. KLRK1-HCST receptor plays a role in immune surveillance against tumors and is required for cytolysis of tumors cells; indeed, melanoma cells that do not express KLRK1 ligands escape from immune surveillance mediated by NK cells. This is Hematopoietic cell signal transducer (Hcst) from Rattus norvegicus (Rat).